A 275-amino-acid chain; its full sequence is Formamidopyrimidine-DNA glycosylase (275 aa).

P2 (schiff-base intermediate with DNA) is an active-site residue. The Proton donor role is filled by E3. Residue K58 is the Proton donor; for beta-elimination activity of the active site. Residues H91, R109, and R154 each contribute to the DNA site. An FPG-type zinc finger spans residues 240 to 274; the sequence is AVYERAGLPCRVCGAPIRRLVQGQRATYFCPSCQK. Catalysis depends on R264, which acts as the Proton donor; for delta-elimination activity.

The protein belongs to the FPG family. Monomer. Zn(2+) is required as a cofactor.

The catalysed reaction is Hydrolysis of DNA containing ring-opened 7-methylguanine residues, releasing 2,6-diamino-4-hydroxy-5-(N-methyl)formamidopyrimidine.. It catalyses the reaction 2'-deoxyribonucleotide-(2'-deoxyribose 5'-phosphate)-2'-deoxyribonucleotide-DNA = a 3'-end 2'-deoxyribonucleotide-(2,3-dehydro-2,3-deoxyribose 5'-phosphate)-DNA + a 5'-end 5'-phospho-2'-deoxyribonucleoside-DNA + H(+). In terms of biological role, involved in base excision repair of DNA damaged by oxidation or by mutagenic agents. Acts as a DNA glycosylase that recognizes and removes damaged bases. Has a preference for oxidized purines, such as 7,8-dihydro-8-oxoguanine (8-oxoG). Has AP (apurinic/apyrimidinic) lyase activity and introduces nicks in the DNA strand. Cleaves the DNA backbone by beta-delta elimination to generate a single-strand break at the site of the removed base with both 3'- and 5'-phosphates. This is Formamidopyrimidine-DNA glycosylase from Bordetella parapertussis (strain 12822 / ATCC BAA-587 / NCTC 13253).